An 862-amino-acid chain; its full sequence is Bifunctional uridylyltransferase/uridylyl-removing enzyme (862 aa).

A uridylyltransferase region spans residues 1–328 (MSTAAIPTDA…FPRRAGAAIV (328 aa)). The segment at 329–685 (INERFQAVRE…ARVSDADQGV (357 aa)) is uridylyl-removing. In terms of domain architecture, HD spans 447-563 (VDQHIMMVLR…GRFADTVGTE (117 aa)). 2 consecutive ACT domains span residues 686 to 765 (QVMV…DRPS) and 794 to 862 (ILSL…RLHI).

The protein belongs to the GlnD family. Mg(2+) is required as a cofactor.

It catalyses the reaction [protein-PII]-L-tyrosine + UTP = [protein-PII]-uridylyl-L-tyrosine + diphosphate. The catalysed reaction is [protein-PII]-uridylyl-L-tyrosine + H2O = [protein-PII]-L-tyrosine + UMP + H(+). With respect to regulation, uridylyltransferase (UTase) activity is inhibited by glutamine, while glutamine activates uridylyl-removing (UR) activity. Functionally, modifies, by uridylylation and deuridylylation, the PII regulatory proteins (GlnB and homologs), in response to the nitrogen status of the cell that GlnD senses through the glutamine level. Under low glutamine levels, catalyzes the conversion of the PII proteins and UTP to PII-UMP and PPi, while under higher glutamine levels, GlnD hydrolyzes PII-UMP to PII and UMP (deuridylylation). Thus, controls uridylylation state and activity of the PII proteins, and plays an important role in the regulation of nitrogen assimilation and metabolism. This Aromatoleum aromaticum (strain DSM 19018 / LMG 30748 / EbN1) (Azoarcus sp. (strain EbN1)) protein is Bifunctional uridylyltransferase/uridylyl-removing enzyme.